The primary structure comprises 217 residues: Cytochrome b5 domain-containing protein 1 (217 aa).

A Cytochrome b5 heme-binding domain is found at 6–72 (PRFYTPREVS…NPKTGDVKTH (67 aa)). Positions 41 and 72 each coordinate heme.

This sequence belongs to the cytochrome b5 family.

It localises to the cytoplasm. It is found in the cytoskeleton. Its subcellular location is the cilium axoneme. Radial spoke stalk protein that binds heme under oxidizing conditions. Required for the coordinated beating of multiple cilia maybe by functioning in a redox signaling pathway. This chain is Cytochrome b5 domain-containing protein 1 (cyb5d1), found in Xenopus tropicalis (Western clawed frog).